The following is a 317-amino-acid chain: Apolipoprotein E (317 aa).

Positions 1–18 (MKVLWVALVITLLAGCQA) are cleaved as a signal peptide. 8 repeat units span residues 80–101 (VLMD…EQLG), 102–123 (PVAQ…ARLA), 124–145 (SDMQ…AMMG), 146–167 (HTTD…KRLL), 168–189 (RDAE…EGSE), 190–211 (RSVS…ARAA), 212–233 (TVGT…QKLR), and 234–255 (GRVE…EQLD). Residues 80 to 255 (VLMDETMKEV…HLEEMREQLD (176 aa)) form an 8 X 22 AA approximate tandem repeats region. Methionine sulfoxide is present on methionine 143. The interval 158 to 168 (HLRKLRKRLLR) is LDL and other lipoprotein receptors binding. 162–165 (LRKR) serves as a coordination point for heparin. Positions 210–290 (AATVGTLASQ…SWFEPLVEDM (81 aa)) are lipid-binding and lipoprotein association. Residue 229–236 (HQKLRGRV) participates in heparin binding. The homooligomerization stretch occupies residues 266–317 (TQMRLQAEAFQARLKSWFEPLVEDMQRQWAGLVEKVQLAMATSSTSAPSENH). Positions 278 to 290 (RLKSWFEPLVEDM) are specificity for association with VLDL.

The protein belongs to the apolipoprotein A1/A4/E family. Homotetramer. May interact with ABCA1; functionally associated with ABCA1 in the biogenesis of HDLs. May interact with APP/A4 amyloid-beta peptide; the interaction is extremely stable in vitro but its physiological significance is unclear. May interact with MAPT. May interact with MAP2. In the cerebrospinal fluid, interacts with secreted SORL1. Interacts with PMEL; this allows the loading of PMEL luminal fragment on ILVs to induce fibril nucleation. APOE exists as multiple glycosylated and sialylated glycoforms within cells and in plasma. The extent of glycosylation and sialylation are tissue and context specific. In terms of processing, glycated in plasma VLDL. Post-translationally, phosphorylated by FAM20C in the extracellular medium.

It localises to the secreted. The protein localises to the extracellular space. Its subcellular location is the extracellular matrix. It is found in the extracellular vesicle. The protein resides in the endosome. It localises to the multivesicular body. Its function is as follows. APOE is an apolipoprotein, a protein associating with lipid particles, that mainly functions in lipoprotein-mediated lipid transport between organs via the plasma and interstitial fluids. APOE is a core component of plasma lipoproteins and is involved in their production, conversion and clearance. Apolipoproteins are amphipathic molecules that interact both with lipids of the lipoprotein particle core and the aqueous environment of the plasma. As such, APOE associates with chylomicrons, chylomicron remnants, very low density lipoproteins (VLDL) and intermediate density lipoproteins (IDL) but shows a preferential binding to high-density lipoproteins (HDL). It also binds a wide range of cellular receptors including the LDL receptor/LDLR and the very low-density lipoprotein receptor/VLDLR that mediate the cellular uptake of the APOE-containing lipoprotein particles. Finally, APOE also has a heparin-binding activity and binds heparan-sulfate proteoglycans on the surface of cells, a property that supports the capture and the receptor-mediated uptake of APOE-containing lipoproteins by cells. This chain is Apolipoprotein E (APOE), found in Physeter macrocephalus (Sperm whale).